Consider the following 344-residue polypeptide: Adenine deaminase (344 aa).

The Zn(2+) site is built by histidine 24, histidine 26, and histidine 204. The Proton donor role is filled by glutamate 207. Aspartate 285 contacts Zn(2+). Aspartate 286 contacts substrate.

This sequence belongs to the metallo-dependent hydrolases superfamily. Adenosine and AMP deaminases family. Adenine deaminase type 2 subfamily. Zn(2+) is required as a cofactor.

The enzyme catalyses adenine + H2O + H(+) = hypoxanthine + NH4(+). Catalyzes the hydrolytic deamination of adenine to hypoxanthine. Plays an important role in the purine salvage pathway and in nitrogen catabolism. The sequence is that of Adenine deaminase from Caulobacter vibrioides (strain ATCC 19089 / CIP 103742 / CB 15) (Caulobacter crescentus).